We begin with the raw amino-acid sequence, 536 residues long: Casein kinase I homolog RAG8 (536 aa).

Positions 26-42 (HSTQVLHGSGQHGMQPS) are enriched in polar residues. The disordered stretch occupies residues 26–68 (HSTQVLHGSGQHGMQPSGNNVLNGLANGATGLQSSASSTSTRD). Over residues 43–65 (GNNVLNGLANGATGLQSSASSTS) the composition is skewed to low complexity. A Protein kinase domain is found at 77–361 (YKIGKKIGEG…QKLDGEYDWM (285 aa)). ATP contacts are provided by residues 83-91 (IGEGSFGVL) and K106. D196 serves as the catalytic Proton acceptor. Polar residues-rich tracts occupy residues 407 to 420 (NNLN…QSHS) and 427 to 436 (DLTQGVSNAP). Positions 407–524 (NNLNGSNVPL…NGKVQVADSN (118 aa)) are disordered. Composition is skewed to low complexity over residues 437–453 (QQPQ…QHTQ) and 463–514 (AYKQ…NQPQ). S-palmitoyl cysteine attachment occurs at residues C535 and C536.

This sequence belongs to the protein kinase superfamily. CK1 Ser/Thr protein kinase family. Casein kinase I subfamily.

The catalysed reaction is L-seryl-[protein] + ATP = O-phospho-L-seryl-[protein] + ADP + H(+). It catalyses the reaction L-threonyl-[protein] + ATP = O-phospho-L-threonyl-[protein] + ADP + H(+). In terms of biological role, casein kinases are operationally defined by their preferential utilization of acidic proteins such as caseins as substrates. The polypeptide is Casein kinase I homolog RAG8 (RAG8) (Kluyveromyces lactis (strain ATCC 8585 / CBS 2359 / DSM 70799 / NBRC 1267 / NRRL Y-1140 / WM37) (Yeast)).